The primary structure comprises 108 residues: UPF0060 membrane protein YE2027 (108 aa).

The next 4 helical transmembrane spans lie at 6–26 (LLFFVTALAEIIGCFLPYLWL), 29–49 (GASMWLLLPAAASLALFVWLL), 59–79 (VYAAYGGVYVATALIWLRVVD), and 85–105 (LFDWVGAAVALVGMLIIVAGW).

It belongs to the UPF0060 family.

The protein resides in the cell inner membrane. The protein is UPF0060 membrane protein YE2027 of Yersinia enterocolitica serotype O:8 / biotype 1B (strain NCTC 13174 / 8081).